Consider the following 128-residue polypeptide: uncharacterized protein (128 aa).

4 helical membrane-spanning segments follow: residues 5-25, 27-47, 60-80, and 87-107; these read ILAL…YSMM, PVLV…PLFL, QLWW…FIGL, and SAVT…HFFF. One can recognise an EamA domain in the interval 9–110; sequence LIWSSSLIVG…FVGHFFFKTK (102 aa).

It is found in the cell membrane. This is an uncharacterized protein from Haemophilus influenzae (strain ATCC 51907 / DSM 11121 / KW20 / Rd).